A 557-amino-acid chain; its full sequence is Cytochrome P450 734A2 (557 aa).

A helical transmembrane segment spans residues 13-35 (WATWRVAAVAAAAAVWVTMHVAA). Cys-495 lines the heme pocket.

It belongs to the cytochrome P450 family. Requires heme as cofactor. As to expression, expressed in roots, shoot apex, leaf sheaths and leaf blades.

It localises to the membrane. In terms of biological role, cytochrome P450 involved in brassinosteroids (BRs) inactivation and regulation of BRs homeostasis. Is a multifunctional and multisubstrate enzyme that controls the endogenous bioactive BR content both by direct inactivation of castasterone (CS) and by decreasing the levels of BR precursors. Catalyzes the oxidation of carbon 22 hydroxylated BR intermediates to produce C26 oxidized metabolites. The chain is Cytochrome P450 734A2 (CYP734A2) from Oryza sativa subsp. japonica (Rice).